Consider the following 289-residue polypeptide: Probable porphobilinogen deaminase (289 aa).

Cys234 is subject to S-(dipyrrolylmethanemethyl)cysteine.

Belongs to the HMBS family. It depends on dipyrromethane as a cofactor.

The enzyme catalyses 4 porphobilinogen + H2O = hydroxymethylbilane + 4 NH4(+). The protein operates within porphyrin-containing compound metabolism; protoporphyrin-IX biosynthesis; coproporphyrinogen-III from 5-aminolevulinate: step 2/4. Tetrapolymerization of the monopyrrole PBG into the hydroxymethylbilane pre-uroporphyrinogen in several discrete steps. This is Probable porphobilinogen deaminase (hemC) from Archaeoglobus fulgidus (strain ATCC 49558 / DSM 4304 / JCM 9628 / NBRC 100126 / VC-16).